Consider the following 182-residue polypeptide: Small ribosomal subunit protein uS4c (182 aa).

The region spanning 82–143 (MRLDNILFRL…KQRSKALIQN (62 aa)) is the S4 RNA-binding domain.

Belongs to the universal ribosomal protein uS4 family. As to quaternary structure, part of the 30S ribosomal subunit. Contacts protein S5. The interaction surface between S4 and S5 is involved in control of translational fidelity.

Its subcellular location is the plastid. It is found in the chloroplast. One of the primary rRNA binding proteins, it binds directly to 16S rRNA where it nucleates assembly of the body of the 30S subunit. Functionally, with S5 and S12 plays an important role in translational accuracy. This Isophysis tasmanica protein is Small ribosomal subunit protein uS4c (rps4).